Reading from the N-terminus, the 311-residue chain is Aspartate carbamoyltransferase catalytic subunit (311 aa).

Arginine 58 and threonine 59 together coordinate carbamoyl phosphate. Position 86 (lysine 86) interacts with L-aspartate. 3 residues coordinate carbamoyl phosphate: arginine 108, histidine 136, and glutamine 139. The L-aspartate site is built by arginine 169 and arginine 223. The carbamoyl phosphate site is built by glycine 264 and proline 265.

The protein belongs to the aspartate/ornithine carbamoyltransferase superfamily. ATCase family. In terms of assembly, heterododecamer (2C3:3R2) of six catalytic PyrB chains organized as two trimers (C3), and six regulatory PyrI chains organized as three dimers (R2).

The enzyme catalyses carbamoyl phosphate + L-aspartate = N-carbamoyl-L-aspartate + phosphate + H(+). It participates in pyrimidine metabolism; UMP biosynthesis via de novo pathway; (S)-dihydroorotate from bicarbonate: step 2/3. Functionally, catalyzes the condensation of carbamoyl phosphate and aspartate to form carbamoyl aspartate and inorganic phosphate, the committed step in the de novo pyrimidine nucleotide biosynthesis pathway. The chain is Aspartate carbamoyltransferase catalytic subunit from Pelodictyon phaeoclathratiforme (strain DSM 5477 / BU-1).